The sequence spans 305 residues: Aurora/IPL1-related protein kinase 2 (305 aa).

Residues 30 to 280 form the Protein kinase domain; sequence FEIGRPLGKG…LEQVKEHYWI (251 aa). ATP-binding positions include 36-44 and Lys59; that span reads LGKGKFGSV. Asp153 (proton acceptor) is an active-site residue.

It belongs to the protein kinase superfamily. Ser/Thr protein kinase family. Aurora subfamily. Component of the CPC complex which consists of icp-1; csc-1; bir-1 and air-2. Within the complex, interacts with icp-1; csc-1 and bir-1. Interacts with zen-4. Interacts with tlk-1 and bmk-1. Phosphorylated. Increased phosphorylation upon chromatin obstructions at anaphase.

It is found in the cytoplasm. It localises to the cytoskeleton. The protein resides in the chromosome. The protein localises to the midbody. Its subcellular location is the spindle. It catalyses the reaction L-seryl-[protein] + ATP = O-phospho-L-seryl-[protein] + ADP + H(+). It carries out the reaction L-threonyl-[protein] + ATP = O-phospho-L-threonyl-[protein] + ADP + H(+). Functionally, serine/threonine-protein kinase component of the chromosomal passenger complex (CPC), a complex that acts as a key regulator of chromosome segregation and cytokinesis. The CPC complex has essential functions at the centromere in ensuring correct chromosome alignment and segregation. Required for histone H3 phosphorylation during segregation of homologous chromosomes in meiosis and mitosis. Required for histone H3 'Ser-10' phosphorylation. Phosphorylates tlk-1 at 'Ser-634', which enhances its activity. Phosphorylates zen-4 at 'Ser-680'. Required for the recruitment of bub-1 to the ring-shaped domain between chromosomes during meiotic anaphase I. Also required for the localization of the condensin I complex subunit smc-4 to mitotic chromosomes. Acts at the spindle midzone and the midbody to prevent cleavage furrow regression upon chromatin obstructions during cytokinesis. In Caenorhabditis elegans, this protein is Aurora/IPL1-related protein kinase 2.